We begin with the raw amino-acid sequence, 184 residues long: Female-specific protein transformer (184 aa).

Basic and acidic residues-rich tracts occupy residues 1–39 (MKMD…DSRK) and 49–58 (DEVREQDRIR). 2 disordered regions span residues 1–123 (MKMD…PKII) and 146–184 (YQRL…RPPY). Composition is skewed to basic residues over residues 59–75 (SLRQ…RSRS) and 84–114 (SRHR…RSPH). A compositionally biased stretch (pro residues) spans 150–159 (PRPPPFPPAP).

Its subcellular location is the nucleus speckle. In terms of biological role, member of the regulatory pathway controlling female somatic sexual differentiation, regulated by Sxl. Activates dsx female-specific splicing by promoting the formation of a splicing enhancer complex which consists of tra, tra2 and sr proteins. The protein is Female-specific protein transformer (tra) of Drosophila simulans (Fruit fly).